Consider the following 184-residue polypeptide: Probable type 3 secretion system regulator AscH (184 aa).

Residues 1 to 25 (MKIEGSDQLGGEQPQRQPLPPESMA) are disordered.

It belongs to the YopR family.

The protein resides in the secreted. May be involved in the regulation of the assembly of the type III secretion system (T3SS), also called injectisome, which is used to inject bacterial effector proteins into eukaryotic host cells. May control the polymerization of the needle. This is Probable type 3 secretion system regulator AscH from Aeromonas salmonicida subsp. salmonicida.